Consider the following 196-residue polypeptide: Imidazoleglycerol-phosphate dehydratase (196 aa).

The protein belongs to the imidazoleglycerol-phosphate dehydratase family.

It is found in the cytoplasm. It catalyses the reaction D-erythro-1-(imidazol-4-yl)glycerol 3-phosphate = 3-(imidazol-4-yl)-2-oxopropyl phosphate + H2O. Its pathway is amino-acid biosynthesis; L-histidine biosynthesis; L-histidine from 5-phospho-alpha-D-ribose 1-diphosphate: step 6/9. This chain is Imidazoleglycerol-phosphate dehydratase, found in Dehalococcoides mccartyi (strain ATCC BAA-2266 / KCTC 15142 / 195) (Dehalococcoides ethenogenes (strain 195)).